The chain runs to 545 residues: Glucose starvation modulator protein 1 (545 aa).

Residues 20 to 48 constitute a DNA-binding region (zn(2)-C6 fungal-type); that stretch reads CGFCHEKHLQCDVGRPCQNCRKRNIASFC. Basic residues predominate over residues 51–60; the sequence is KVKRRRKRKR. Disordered stretches follow at residues 51–131 and 228–270; these read KVKR…AMKD and YISL…WQQQ. Residues 61–71 are compositionally biased toward basic and acidic residues; the sequence is SDASNFDKDEA. The span at 72-92 shows a compositional bias: polar residues; it reads ATQTLNFNTVNPGEGSSSAMT. Over residues 98-110 the composition is skewed to low complexity; sequence TGTTTATTTRTTT. Residues 111–125 show a composition bias toward polar residues; the sequence is NFRSESKASSSTENI. Residues 257–270 show a composition bias toward low complexity; that stretch reads QQKESQQMQLWQQQ. The region spanning 416–486 is the PAS domain; the sequence is ELENMSKLVN…DLFHEHLAFG (71 aa).

This sequence belongs to the ERT1/acuK family.

It localises to the nucleus. Transcription factor which regulates nonfermentable carbon utilization. This chain is Glucose starvation modulator protein 1 (GSM1), found in Zygosaccharomyces rouxii (strain ATCC 2623 / CBS 732 / NBRC 1130 / NCYC 568 / NRRL Y-229).